The following is a 431-amino-acid chain: UDP-N-acetylglucosamine 1-carboxyvinyltransferase (431 aa).

K22 to N23 is a binding site for phosphoenolpyruvate. UDP-N-acetyl-alpha-D-glucosamine is bound at residue R102. C126 functions as the Proton donor in the catalytic mechanism. C126 is subject to 2-(S-cysteinyl)pyruvic acid O-phosphothioketal. Residues D318 and I340 each coordinate UDP-N-acetyl-alpha-D-glucosamine.

This sequence belongs to the EPSP synthase family. MurA subfamily.

The protein localises to the cytoplasm. It catalyses the reaction phosphoenolpyruvate + UDP-N-acetyl-alpha-D-glucosamine = UDP-N-acetyl-3-O-(1-carboxyvinyl)-alpha-D-glucosamine + phosphate. The protein operates within cell wall biogenesis; peptidoglycan biosynthesis. Cell wall formation. Adds enolpyruvyl to UDP-N-acetylglucosamine. The polypeptide is UDP-N-acetylglucosamine 1-carboxyvinyltransferase (Bartonella henselae (strain ATCC 49882 / DSM 28221 / CCUG 30454 / Houston 1) (Rochalimaea henselae)).